An 852-amino-acid polypeptide reads, in one-letter code: Chitin synthase 1 (852 aa).

Disordered stretches follow at residues 27–46 and 53–97; these read EDQD…TNYA and SSLR…QANG. A compositionally biased stretch (polar residues) spans 53–74; sequence SSLRSQKSANKPTTAQNRNSAA. The next 7 membrane-spanning stretches (helical) occupy residues 492-509, 532-552, 572-592, 601-621, 686-706, 787-807, and 830-850; these read RWLN…IHFR, VISL…FYFI, IFDF…ICSM, FLFM…LFCS, FLPY…YAFC, THLV…ITTS, and CGLG…GIFT.

Belongs to the chitin synthase family. Class II subfamily.

Its subcellular location is the cell membrane. The catalysed reaction is [(1-&gt;4)-N-acetyl-beta-D-glucosaminyl](n) + UDP-N-acetyl-alpha-D-glucosamine = [(1-&gt;4)-N-acetyl-beta-D-glucosaminyl](n+1) + UDP + H(+). Its function is as follows. Polymerizes chitin, a structural polymer of the cell wall and septum, by transferring the sugar moiety of UDP-GlcNAc to the non-reducing end of the growing chitin polymer. This chain is Chitin synthase 1 (CHS1), found in Mucor circinelloides f. lusitanicus (Mucor racemosus var. lusitanicus).